Reading from the N-terminus, the 627-residue chain is BURP domain-containing protein 12 (627 aa).

The signal sequence occupies residues Met1 to Gly25. Residues Asn119, Asn175, Asn251, Asn366, Asn384, and Asn530 are each glycosylated (N-linked (GlcNAc...) asparagine). The 212-residue stretch at Phe415–Ala626 folds into the BURP domain.

In terms of tissue distribution, expressed in stems, leaves, shoot and panicles.

This is BURP domain-containing protein 12 (BURP12) from Oryza sativa subsp. japonica (Rice).